Reading from the N-terminus, the 349-residue chain is Decapping nuclease RAI1 (349 aa).

Glu-157 serves as a coordination point for a divalent metal cation. Glu-205 lines the substrate pocket. Asp-207, Glu-222, and Leu-223 together coordinate a divalent metal cation. The substrate site is built by Lys-224 and Gln-248.

The protein belongs to the DXO/Dom3Z family. In terms of assembly, interacts with RAT1; the interaction is direct, stabilizes RAT1 protein structure and stimulates its exoribonuclease activity. The interaction also stimulates RAI1 pyrophosphohydrolase activity, probably by recruiting it to mRNA substrates. It depends on a divalent metal cation as a cofactor.

It localises to the nucleus. It carries out the reaction a 5'-end NAD(+)-phospho-ribonucleoside in mRNA + H2O = a 5'-end phospho-ribonucleoside in mRNA + NAD(+) + H(+). The catalysed reaction is a 5'-end (N(7)-methyl 5'-triphosphoguanosine)-ribonucleoside-ribonucleotide in mRNA + H2O = a (N(7)-methyl 5'-triphosphoguanosine)-nucleoside + a 5'-end phospho-ribonucleoside in mRNA + H(+). The enzyme catalyses a 5'-end triphospho-ribonucleoside in mRNA + H2O = a 5'-end phospho-ribonucleoside in mRNA + diphosphate + H(+). Decapping enzyme for NAD-capped RNAs: specifically hydrolyzes the nicotinamide adenine dinucleotide (NAD) cap from a subset of RNAs by removing the entire NAD moiety from the 5'-end of an NAD-capped RNA. The NAD-cap is present at the 5'-end of some RNAs and snoRNAs. In contrast to the canonical 5'-end N7 methylguanosine (m7G) cap, the NAD cap promotes mRNA decay. Also acts as a non-canonical decapping enzyme that removes the entire cap structure of m7G capped or incompletely capped RNAs. Has decapping activity toward incomplete 5'-end m7G cap mRNAs such as unmethylated 5'-end-capped RNA (cap0), while it has no activity toward 2'-O-ribose methylated m7G cap (cap1). Also possesses RNA 5'-pyrophosphohydrolase activity by hydrolyzing the 5'-end triphosphate to release pyrophosphates. Stimulates exoribonuclease activity of Rat1, allowing it to degrade RNAs with stable secondary structure more effectively. This chain is Decapping nuclease RAI1 (RAI1), found in Yarrowia lipolytica (strain CLIB 122 / E 150) (Yeast).